The primary structure comprises 429 residues: Ribosomal RNA small subunit methyltransferase B (429 aa).

S-adenosyl-L-methionine is bound by residues 254–260 (CAAPGGK), Asp-277, Asp-303, and Asp-322. Cys-375 functions as the Nucleophile in the catalytic mechanism. The segment at 397–419 (ALSETGTPDQPGQQNLPGGEEGD) is disordered. Positions 400 to 412 (ETGTPDQPGQQNL) are enriched in polar residues.

The protein belongs to the class I-like SAM-binding methyltransferase superfamily. RsmB/NOP family.

The protein localises to the cytoplasm. The enzyme catalyses cytidine(967) in 16S rRNA + S-adenosyl-L-methionine = 5-methylcytidine(967) in 16S rRNA + S-adenosyl-L-homocysteine + H(+). Its function is as follows. Specifically methylates the cytosine at position 967 (m5C967) of 16S rRNA. The chain is Ribosomal RNA small subunit methyltransferase B from Salmonella paratyphi B (strain ATCC BAA-1250 / SPB7).